We begin with the raw amino-acid sequence, 63 residues long: Large ribosomal subunit protein bL28 (63 aa).

Belongs to the bacterial ribosomal protein bL28 family.

The protein is Large ribosomal subunit protein bL28 of Clostridium beijerinckii (strain ATCC 51743 / NCIMB 8052) (Clostridium acetobutylicum).